An 871-amino-acid chain; its full sequence is Transient receptor potential cation channel subfamily V member 4 (871 aa).

A disordered region spans residues 1–68 (MADSSEGPRA…GPGDGRPNLR (68 aa)). Topologically, residues 1–469 (MADSSEGPRA…RDKWRKFGAV (469 aa)) are cytoplasmic. Y110 is modified (phosphotyrosine). Residues K192, K197, N201, 236 to 239 (YRGQ), and R248 contribute to the ATP site. ANK repeat units lie at residues 237–266 (RGQTALHIAIERRCKHYVELLVAQGADVHA) and 284–313 (FGELPLSLAACTNQPHIVNYLTENPHKKAD). Position 249 to 251 (249 to 251 (RCK)) interacts with a 1,2-diacyl-sn-glycero-3-phospho-(1D-myo-inositol-4,5-bisphosphate). Y253 is modified (phosphotyrosine). A 1,2-diacyl-sn-glycero-3-phospho-(1D-myo-inositol-4,5-bisphosphate)-binding positions include 296 to 299 (NQPH) and K344. The stretch at 369 to 398 (DGLSPLMMAAKTGKIGIFQHIIRREVTDED) is one ANK 3 repeat. The chain crosses the membrane as a helical span at residues 470-490 (SFYINVVSYLCAMVIFTLTAY). At 491–507 (YQPLEGTPPYPYRTTVD) the chain is on the extracellular side. The chain crosses the membrane as a helical span at residues 508-534 (YLRLAGEVITLFTGVLFFFTNIKDLFM). Residues 535 to 547 (KKCPGVNSLFIDG) lie on the Cytoplasmic side of the membrane. A helical membrane pass occupies residues 548 to 568 (SFQLLYFIYSVLVIVSAALYL). The Extracellular segment spans residues 569 to 572 (AGIE). A helical transmembrane segment spans residues 573-593 (AYLAVMVFALVLGWMNALYFT). Residues 594 to 608 (RGLKLTGTYSIMIQK) lie on the Cytoplasmic side of the membrane. The helical transmembrane segment at 609 to 636 (ILFKDLFRFLLVYLLFMIGYASALVSLL) threads the bilayer. The Extracellular segment spans residues 637–665 (NPCANMKVCNEDQTNCTVPTYPSCRDSET). The segment at residues 666–685 (FSTFLLDLFKLTIGMGDLEM) is an intramembrane region (pore-forming). Residues 679-682 (GMGD) carry the Selectivity filter motif. D682 is a Ca(2+) binding site. The Extracellular segment spans residues 686–693 (LSSTKYPV). A helical transmembrane segment spans residues 694–722 (VFIILLVTYIILTFVLLLNMLIALMGETV). The Cytoplasmic portion of the chain corresponds to 723–871 (GQVSKESKHI…RKWRTDDAPL (149 aa)). Phosphotyrosine is present on Y805. An interaction with calmodulin and ITPR3 region spans residues 812 to 831 (HTVGRLRRDRWSSVVPRVVE). The residue at position 824 (S824) is a Phosphoserine. The tract at residues 849 to 871 (GNPRCDGHQQGYPRKWRTDDAPL) is disordered.

This sequence belongs to the transient receptor (TC 1.A.4) family. TrpV subfamily. TRPV4 sub-subfamily. Homotetramer. Self-associates in an isoform-specific manner. Isoform 1 and isoform 5 can oligomerize, but isoform 2, isoform 4 and isoform 6 cannot oligomerize. Interacts with calmodulin. Interacts with Map7 and Src family Tyr protein kinases LYN, SRC, FYN, HCK, LCK and YES. Interacts with CTNNB1. The TRPV4 and CTNNB1 complex can interact with CDH1. Interacts with PACSIN1, PACSIN2 and PACSIN3 (via SH3 domain). Part of a complex containing MLC1, AQP4, HEPACAM and ATP1B1. Interacts with ITPR3. Interacts with AQP5; the interaction is probably indirect and regulates TRPV4 activation by hypotonicity. Interacts with ANO1. Interacts (via C-terminus) with PKD2 (via C-terminus). Interacts with DDX3X; this interaction is decreased when the channel is activated. Post-translationally, N-glycosylated. As to expression, found in the synoviocytes from patients with (RA) and without (CTR) rheumatoid arthritis (at protein level).

It localises to the cell membrane. The protein resides in the apical cell membrane. Its subcellular location is the cell junction. The protein localises to the adherens junction. It is found in the cell projection. It localises to the cilium. The protein resides in the endoplasmic reticulum. The catalysed reaction is Ca(2+)(in) = Ca(2+)(out). Its activity is regulated as follows. Channel activation is inhibited by binding to phosphatidylinositol-4,5-bisphosphate, and to a much lesser degree by phosphatidylinositol-3,4,5-trisphosphate. Not inhibited by phosphatidylinositol-3,4-bisphosphate and phosphatidylinositol-3,5-bisphosphate. Non-selective calcium permeant cation channel involved in osmotic sensitivity and mechanosensitivity. Activation by exposure to hypotonicity within the physiological range exhibits an outward rectification. Also activated by heat, low pH, citrate and phorbol esters. Increase of intracellular Ca(2+) potentiates currents. Channel activity seems to be regulated by a calmodulin-dependent mechanism with a negative feedback mechanism. Promotes cell-cell junction formation in skin keratinocytes and plays an important role in the formation and/or maintenance of functional intercellular barriers. Acts as a regulator of intracellular Ca(2+) in synoviocytes. Plays an obligatory role as a molecular component in the nonselective cation channel activation induced by 4-alpha-phorbol 12,13-didecanoate and hypotonic stimulation in synoviocytes and also regulates production of IL-8. Together with PKD2, forms mechano- and thermosensitive channels in cilium. Negatively regulates expression of PPARGC1A, UCP1, oxidative metabolism and respiration in adipocytes. Regulates expression of chemokines and cytokines related to pro-inflammatory pathway in adipocytes. Together with AQP5, controls regulatory volume decrease in salivary epithelial cells. Required for normal development and maintenance of bone and cartilage. In its inactive state, may sequester DDX3X at the plasma membrane. When activated, the interaction between both proteins is affected and DDX3X relocalizes to the nucleus. In neurons of the central nervous system, could play a role in triggering voluntary water intake in response to increased sodium concentration in body fluid. In terms of biological role, non-selective calcium permeant cation channel involved in osmotic sensitivity and mechanosensitivity. Activation by exposure to hypotonicity within the physiological range exhibits an outward rectification. Also activated by phorbol esters. Has the same channel activity as isoform 1, and is activated by the same stimuli. Functionally, lacks channel activity, due to impaired oligomerization and intracellular retention. Its function is as follows. (Microbial infection) Facilitates hepatitis C virus (HCV) replication, possibly through its action on DDX3X. (Microbial infection) Facilitates Dengue virus (DENV) replication, possibly through its action on DDX3X. In terms of biological role, (Microbial infection) Facilitates Zika virus (ZIKV) replication, possibly through its action on DDX3X. In Homo sapiens (Human), this protein is Transient receptor potential cation channel subfamily V member 4 (TRPV4).